A 346-amino-acid polypeptide reads, in one-letter code: Methylthioribose-1-phosphate isomerase (346 aa).

Substrate-binding positions include 46 to 48 (RGA), R89, and Q196. The Proton donor role is filled by D237. 247–248 (NK) is a substrate binding site.

The protein belongs to the eIF-2B alpha/beta/delta subunits family. MtnA subfamily.

It catalyses the reaction 5-(methylsulfanyl)-alpha-D-ribose 1-phosphate = 5-(methylsulfanyl)-D-ribulose 1-phosphate. It functions in the pathway amino-acid biosynthesis; L-methionine biosynthesis via salvage pathway; L-methionine from S-methyl-5-thio-alpha-D-ribose 1-phosphate: step 1/6. Its function is as follows. Catalyzes the interconversion of methylthioribose-1-phosphate (MTR-1-P) into methylthioribulose-1-phosphate (MTRu-1-P). The chain is Methylthioribose-1-phosphate isomerase from Trichlorobacter lovleyi (strain ATCC BAA-1151 / DSM 17278 / SZ) (Geobacter lovleyi).